The sequence spans 1335 residues: Xanthine dehydrogenase/oxidase (1335 aa).

Residues 7 to 94 (DELVFFVNGK…HVAVTTVEGI (88 aa)) enclose the 2Fe-2S ferredoxin-type domain. 8 residues coordinate [2Fe-2S] cluster: Cys-46, Cys-51, Cys-54, Cys-76, Cys-115, Cys-118, Cys-150, and Cys-152. The region spanning 231–416 (FEGERVTWIQ…VSIVIPYSRK (186 aa)) is the FAD-binding PCMH-type domain. FAD contacts are provided by residues 259–266 (LVVGNTEI), Phe-339, 349–353 (SIGGN), Asp-362, Leu-406, and Lys-424. Cys-538 and Cys-995 form a disulfide bridge. Residues Gln-770 and Phe-801 each contribute to the Mo-molybdopterin site. Positions 805 and 883 each coordinate substrate. Mo-molybdopterin is bound at residue Arg-915. Phe-917 and Thr-1013 together coordinate substrate. Ala-1082 lines the Mo-molybdopterin pocket. Catalysis depends on Glu-1264, which acts as the Proton acceptor.

It belongs to the xanthine dehydrogenase family. As to quaternary structure, homodimer. Interacts with BTN1A1. Requires FAD as cofactor. The cofactor is Mo-molybdopterin. It depends on [2Fe-2S] cluster as a cofactor. Subject to partial proteolysis; this alters the enzyme from the dehydrogenase form (D) to the oxidase form (O). In terms of processing, contains sulfhydryl groups that are easily oxidized (in vitro); this alters the enzyme from the dehydrogenase form (D) to the oxidase form (O).

It is found in the cytoplasm. Its subcellular location is the peroxisome. The protein localises to the secreted. It carries out the reaction xanthine + NAD(+) + H2O = urate + NADH + H(+). It catalyses the reaction hypoxanthine + NAD(+) + H2O = xanthine + NADH + H(+). The catalysed reaction is xanthine + O2 + H2O = urate + H2O2. Its activity is regulated as follows. Can be converted from the dehydrogenase form (D) to the oxidase form (O) irreversibly by proteolysis or reversibly through the oxidation of sulfhydryl groups. Functionally, key enzyme in purine degradation. Catalyzes the oxidation of hypoxanthine to xanthine. Catalyzes the oxidation of xanthine to uric acid. Contributes to the generation of reactive oxygen species. The chain is Xanthine dehydrogenase/oxidase (Xdh) from Mus musculus (Mouse).